Consider the following 288-residue polypeptide: Putative transcription factor kapC (288 aa).

The span at 1–10 (MQPTLAPAPH) shows a compositional bias: pro residues. Residues 1–121 (MQPTLAPAPH…AAQRAFRQRK (121 aa)) are disordered. Positions 26-41 (HDQLLAAHQHLSHPQQ) are enriched in low complexity. A compositionally biased stretch (pro residues) spans 42–54 (ARPPPPPPQPPHM). Over residues 84-93 (QPDLSGQESP) the composition is skewed to polar residues. A bZIP domain is found at 100–163 (PLSTSKRAAQ…EYIINLQSRL (64 aa)). Residues 101 to 124 (LSTSKRAAQNRAAQRAFRQRKEAH) are basic motif. A compositionally biased stretch (low complexity) spans 106-116 (RAAQNRAAQRA). Positions 128–159 (LEGKVKAYETMGEAIKALQAENYQLREYIINL) are leucine-zipper. Disordered regions lie at residues 172-226 (ELPG…NDDM) and 242-288 (PPTE…PLIS). Residues 202–212 (PVPPPTAPQQP) are compositionally biased toward pro residues. Residues 213-222 (QPAQNQASAP) show a composition bias toward low complexity.

This sequence belongs to the bZIP family.

Its subcellular location is the nucleus. Its function is as follows. Putative transcription factor. The chain is Putative transcription factor kapC (kapC) from Aspergillus clavatus (strain ATCC 1007 / CBS 513.65 / DSM 816 / NCTC 3887 / NRRL 1 / QM 1276 / 107).